A 312-amino-acid chain; its full sequence is Apolipoprotein E (312 aa).

The signal sequence occupies residues 1 to 18 (MKALWALLLVPLLTGCLA). Repeat copies occupy residues 72 to 93 (VLME…EQLG), 94 to 115 (PVAE…ARLG), 116 to 137 (ADME…TMLG), 138 to 159 (QSTE…KRLM), 160 to 181 (RDAD…EGAE), 182 to 203 (RGVS…QRTA), 204 to 225 (NLGA…DRIR), and 226 to 247 (GRLE…EQME). Positions 72-247 (VLMEDTMTEV…RLEEVREQME (176 aa)) are 8 X 22 AA approximate tandem repeats. Met135 is modified (methionine sulfoxide). At Ser139 the chain carries Phosphoserine. Positions 150–160 (HLRKMRKRLMR) are LDL and other lipoprotein receptors binding. Positions 150 to 160 (HLRKMRKRLMR) are LDL receptor binding. Residue 154–157 (MRKR) participates in heparin binding. The tract at residues 202-282 (TANLGAGAAQ…GWFEPLVEDM (81 aa)) is lipid-binding and lipoprotein association. 221 to 228 (SDRIRGRL) is a heparin binding site. Residues 258–312 (QQIRLQAEIFQARIKGWFEPLVEDMQRQWANLMEKIQASVATNSIASTTVPLENQ) are homooligomerization. Positions 270-282 (RIKGWFEPLVEDM) are specificity for association with VLDL.

The protein belongs to the apolipoprotein A1/A4/E family. In terms of assembly, homotetramer. May interact with ABCA1; functionally associated with ABCA1 in the biogenesis of HDLs. May interact with APP/A4 amyloid-beta peptide; the interaction is extremely stable in vitro but its physiological significance is unclear. May interact with MAPT. May interact with MAP2. In the cerebrospinal fluid, interacts with secreted SORL1. Interacts with PMEL; this allows the loading of PMEL luminal fragment on ILVs to induce fibril nucleation. Post-translationally, APOE exists as multiple glycosylated and sialylated glycoforms within cells and in plasma. The extent of glycosylation and sialylation are tissue and context specific. In terms of processing, glycated in plasma VLDL. Phosphorylated by FAM20C in the extracellular medium.

Its subcellular location is the secreted. It localises to the extracellular space. The protein resides in the extracellular matrix. The protein localises to the extracellular vesicle. It is found in the endosome. Its subcellular location is the multivesicular body. In terms of biological role, APOE is an apolipoprotein, a protein associating with lipid particles, that mainly functions in lipoprotein-mediated lipid transport between organs via the plasma and interstitial fluids. APOE is a core component of plasma lipoproteins and is involved in their production, conversion and clearance. Apolipoproteins are amphipathic molecules that interact both with lipids of the lipoprotein particle core and the aqueous environment of the plasma. As such, APOE associates with chylomicrons, chylomicron remnants, very low density lipoproteins (VLDL) and intermediate density lipoproteins (IDL) but shows a preferential binding to high-density lipoproteins (HDL). It also binds a wide range of cellular receptors including the LDL receptor/LDLR and the very low-density lipoprotein receptor/VLDLR that mediate the cellular uptake of the APOE-containing lipoprotein particles. Finally, APOE also has a heparin-binding activity and binds heparan-sulfate proteoglycans on the surface of cells, a property that supports the capture and the receptor-mediated uptake of APOE-containing lipoproteins by cells. This Rattus norvegicus (Rat) protein is Apolipoprotein E (Apoe).